The following is a 24-amino-acid chain: Caerulein precursor fragment BM1 (24 aa).

As to expression, expressed by the skin glands.

It localises to the secreted. Its function is as follows. Antimicrobial peptide. This is Caerulein precursor fragment BM1 from Xenopus boumbaensis (Mawa clawed frog).